A 370-amino-acid polypeptide reads, in one-letter code: MPINQKIPTWFAVPAVFAVLSVISYQTLIVPENLEGAKNVLTMAKTIPIPVAGPESIEFDPKGEGPYAAVVDGRILKWRGDDLGWVDFAYTSPHRGNCSKTEVVPTCGRPLGLTFEKKTGDLYICDGYLGLMKVGPEGGLAELIVDEAEGRKVMFANQGDIDEEEDVFYFNDSSDKYHFRDVFFVAVSGERSGRVIRYDKKTKEAKVIMDNLVCNNGLALNKDRSFLITCESGTSLVHRYWIKGPKAGTRDIFAKVPGYPDNIRLTSTGDFWIGLHCKKNLIGRLIVKYKWLGKLVEKTMKLEYVIAFINGFKPHGVAVKISGETGEVLELLEDKEGKTMKYVSEAYERDDGKLWFGSVYWPAVWVLDRK.

Residues 1 to 26 form the signal peptide; the sequence is MPINQKIPTWFAVPAVFAVLSVISYQ. 2 N-linked (GlcNAc...) asparagine glycosylation sites follow: Asn-97 and Asn-171.

This sequence belongs to the strictosidine synthase family.

Its subcellular location is the vacuole. The chain is Protein STRICTOSIDINE SYNTHASE-LIKE 9 from Arabidopsis thaliana (Mouse-ear cress).